Consider the following 705-residue polypeptide: Dolichyl-diphosphooligosaccharide--protein glycosyltransferase subunit STT3A (705 aa).

Residues 1–17 (MTKFGFLRLSYEKQDTL) lie on the Cytoplasmic side of the membrane. Residues 18-38 (LKLLILSMAAVLSFSTRLFAV) traverse the membrane as a helical segment. The Lumenal portion of the chain corresponds to 39–119 (LRFESVIHEF…IDIRNVCVFL (81 aa)). The DXD motif 1 motif lies at 47–49 (EFD). Asp49 is a Mn(2+) binding site. Residues 120 to 138 (APLFSSFTTIVTYHLTKEL) traverse the membrane as a helical segment. Over 139–140 (KD) the chain is Cytoplasmic. A helical transmembrane segment spans residues 141–158 (AGAGLLAAAMIAVVPGYI). Topologically, residues 159–169 (SRSVAGSYDNE) are lumenal. Mn(2+)-binding residues include Asp167 and Glu169. The DXD motif 2 signature appears at 167 to 169 (DNE). Residues 170–189 (GIAIFCMLLTYYMWIKAVKT) form a helical membrane-spanning segment. The Cytoplasmic segment spans residues 190-191 (GS). The chain crosses the membrane as a helical span at residues 192-206 (ICWAAKCALAYFYMV). The Lumenal segment spans residues 207–211 (SSWGG). A helical transmembrane segment spans residues 212–228 (YVFLINLIPLHVLVLML). At 229–233 (TGRFS) the chain is on the cytoplasmic side. Residues 234–259 (HRIYVAYCTVYCLGTILSMQISFVGF) traverse the membrane as a helical segment. Over 260–267 (QPVLSSEH) the chain is Lumenal. Residues 268 to 287 (MAAFGVFGLCQIHAFVDYLR) form a helical membrane-spanning segment. Topologically, residues 288–300 (SKLNPQQFEVLFR) are cytoplasmic. Residues 301 to 321 (SVISLVGFVLLTVGALLMLTG) traverse the membrane as a helical segment. Residues 322-356 (KISPWTGRFYSLLDPSYAKNNIPIIASVSEHQPTT) are Lumenal-facing. The SVSE motif signature appears at 348 to 351 (SVSE). Residues 357–379 (WSSYYFDLQLLVFMFPVGLYYCF) traverse the membrane as a helical segment. At 380 to 385 (SNLSDA) the chain is on the cytoplasmic side. Residues 386–402 (RIFIIMYGVTSMYFSAV) traverse the membrane as a helical segment. Topologically, residues 403–406 (MVRL) are lumenal. Residue Arg405 participates in dolichyl diphosphooligosaccharide binding. A helical membrane pass occupies residues 407 to 428 (MLVLAPVMCILSGIGVSQVLST). Over 429-453 (YMKNLDISRPDKKSKKQQDSTYPIK) the chain is Cytoplasmic. Residues 454 to 473 (NEVASGMILVMAFFLITYTF) form a helical membrane-spanning segment. The Lumenal segment spans residues 474–705 (HSTWVTSEAY…DLDNRGLSRT (232 aa)). Positions 525-527 (WWD) are interacts with target acceptor peptide in protein substrate. Positions 525–529 (WWDYG) match the WWDYG motif motif. Residue Tyr530 participates in dolichyl diphosphooligosaccharide binding. N-linked (GlcNAc...) asparagine glycans are attached at residues Asn537 and Asn544. Residue Asn548 is glycosylated (N-linked (GlcNAc...) (high mannose) asparagine). Residues 592–599 (DINKFLWM) carry the DK motif motif.

The protein belongs to the STT3 family. Component of the oligosaccharyltransferase (OST) complex. There are 2 OST complexes, OST-A and OST-B, which contain STT3A or STT3B as catalytic subunit, respectively. OST-A and OST-B contain common core subunits RPN1, RPN2, OST48, OST4, DAD1 and TMEM258, and OST-A contains DC2/OSTC and KRTCAP2/KCP2 specific accessory subunits. OST-A complex assembly occurs through the formation of 3 subcomplexes. Subcomplex 1 contains RPN1 and TMEM258, subcomplex 2 contains the OST-A-specific subunits STT3A, DC2/OSTC, and KCP2 as well as the core subunit OST4, and subcomplex 3 contains RPN2, DAD1, and OST48. The OST-A complex can form stable complexes with the Sec61 complex or with both the Sec61 and TRAP complexes. The cofactor is Mg(2+). Mn(2+) serves as cofactor. As to expression, expressed at high levels in placenta, liver, muscle and pancreas, and at very low levels in brain, lung and kidney. Expressed in skin fibroblasts (at protein level).

The protein localises to the endoplasmic reticulum. The protein resides in the endoplasmic reticulum membrane. The catalysed reaction is a di-trans,poly-cis-dolichyl diphosphooligosaccharide + L-asparaginyl-[protein] = N(4)-(oligosaccharide-(1-&gt;4)-N-acetyl-beta-D-glucosaminyl-(1-&gt;4)-N-acetyl-beta-D-glucosaminyl)-L-asparaginyl-[protein] + a di-trans,poly-cis-dolichyl diphosphate + H(+). The protein operates within protein modification; protein glycosylation. STT3A, but not STT3B, is specifically inhibited by the N-glycosylation inhibitor NGI-235, which prevents productive binding pose of the glycan donor in the active site of STT3A. Catalytic subunit of the oligosaccharyl transferase (OST) complex that catalyzes the initial transfer of a defined glycan (Glc(3)Man(9)GlcNAc(2) in eukaryotes) from the lipid carrier dolichol-pyrophosphate to an asparagine residue within an Asn-X-Ser/Thr consensus motif in nascent polypeptide chains, the first step in protein N-glycosylation. N-glycosylation occurs cotranslationally and the complex associates with the Sec61 complex at the channel-forming translocon complex that mediates protein translocation across the endoplasmic reticulum (ER). All subunits are required for a maximal enzyme activity. This subunit contains the active site and the acceptor peptide and donor lipid-linked oligosaccharide (LLO) binding pockets. STT3A is present in the majority of OST complexes and mediates cotranslational N-glycosylation of most sites on target proteins, while STT3B-containing complexes are required for efficient post-translational glycosylation and mediate glycosylation of sites that have been skipped by STT3A. STT3A-containing OST-A complex is also required to prevent hyperglycosylation of some target proteins by preventing glycosylation of facultative sites before folding of target proteins is completed. The sequence is that of Dolichyl-diphosphooligosaccharide--protein glycosyltransferase subunit STT3A from Homo sapiens (Human).